A 538-amino-acid chain; its full sequence is Syncytin-1 (538 aa).

Positions 1–20 (MALPYHIFLFTVLLPSFTLT) are cleaved as a signal peptide. Residues 21–443 (APPPCRCMTS…NTGPWGLLSQ (423 aa)) lie on the Extracellular side of the membrane. Residue asparagine 169 is glycosylated (N-linked (GlcNAc...) asparagine). Residues 186–189 (CWIC) carry the CXXC motif. Disulfide bonds link cysteine 186/cysteine 189, cysteine 186/cysteine 405, and cysteine 397/cysteine 404. 5 N-linked (GlcNAc...) asparagine glycosylation sites follow: asparagine 208, asparagine 214, asparagine 234, asparagine 242, and asparagine 281. Positions 320–340 (ILPFVIGAGVLGALGTGIGGI) are fusion peptide. An immunosuppression region spans residues 380–396 (LQNRRALDLLTAERGGT). Residues 397–406 (CLFLGEECCY) carry the CX6CC motif. Residue asparagine 409 is glycosylated (N-linked (GlcNAc...) asparagine). A helical membrane pass occupies residues 444–464 (WMPWILPFLGPLAAIILLLLF). Residues 465-484 (GPCIFNLLVNFVSSRIEAVK) form an essential for the fusiogenic function region. Residues 465–538 (GPCIFNLLVN…LLRPNSAGSS (74 aa)) are Cytoplasmic-facing. The interval 496–538 (KIYRRPLDRPASPRSDVNDIKGTPPEEISAAQPLLRPNSAGSS) is disordered.

It belongs to the gamma type-C retroviral envelope protein family. HERV class-I W env subfamily. In terms of assembly, the mature envelope protein (Env) consists of a trimer of SU-TM heterodimers attached probably by a labile interchain disulfide bond. Interacts with the C-type lectin CD209/DC-SIGN. Specific enzymatic cleavages in vivo yield mature proteins. Envelope glycoproteins are synthesized as an inactive precursor that is heavily N-glycosylated and processed likely by furin in the Golgi to yield the mature SU and TM proteins. The cleavage site between SU and TM requires the minimal sequence [KR]-X-[KR]-R. The intracytoplasmic tail cleavage by the viral protease that is required for the fusiogenic activity of some retroviruses envelope proteins seems to have been lost during evolution. In terms of processing, the CXXC motif is highly conserved across a broad range of retroviral envelope proteins. It is thought to participate in the formation of a labile disulfide bond possibly with the CX6CC motif present in the transmembrane protein. Isomerization of the intersubunit disulfide bond to an SU intrachain disulfide bond is thought to occur upon receptor recognition in order to allow membrane fusion. Expressed at higher level in placental syncytiotrophoblast. Expressed at intermediate level in testis. Seems also to be found at low level in adrenal tissue, bone marrow, breast, colon, kidney, ovary, prostate, skin, spleen, thymus, thyroid, brain and trachea. Both mRNA and protein levels are significantly increased in the brain of individuals with multiple sclerosis, particularly in astrocytes and microglia.

Its subcellular location is the cell membrane. It localises to the virion. Its function is as follows. This endogenous retroviral envelope protein has retained its original fusogenic properties and participates in trophoblast fusion and the formation of a syncytium during placenta morphogenesis. May induce fusion through binding of SLC1A4 and SLC1A5. Functionally, endogenous envelope proteins may have kept, lost or modified their original function during evolution. Retroviral envelope proteins mediate receptor recognition and membrane fusion during early infection. The surface protein (SU) mediates receptor recognition, while the transmembrane protein (TM) acts as a class I viral fusion protein. The protein may have at least 3 conformational states: pre-fusion native state, pre-hairpin intermediate state, and post-fusion hairpin state. During viral and target cell membrane fusion, the coiled coil regions (heptad repeats) assume a trimer-of-hairpins structure, positioning the fusion peptide in close proximity to the C-terminal region of the ectodomain. The formation of this structure appears to drive apposition and subsequent fusion of membranes. In Homo sapiens (Human), this protein is Syncytin-1 (ERVW-1).